Here is a 215-residue protein sequence, read N- to C-terminus: Adenylate kinase (215 aa).

10-15 (GTGKGT) provides a ligand contact to ATP. The tract at residues 30-59 (STGDMLRESVVLKNKIGMIIKNIIEEGKLV) is NMP. AMP is bound by residues Thr-31, Arg-36, 57-59 (KLV), 85-88 (GFPR), and Gln-92. Positions 122 to 159 (GRRIHIQSGRIYHVKFKPPKIKDKDDLTGQTLITRKDD) are LID. ATP contacts are provided by residues Arg-123 and 132 to 133 (IY). The AMP site is built by Arg-156 and Arg-167. Position 200 (Leu-200) interacts with ATP.

The protein belongs to the adenylate kinase family. As to quaternary structure, monomer.

It is found in the cytoplasm. It carries out the reaction AMP + ATP = 2 ADP. Its pathway is purine metabolism; AMP biosynthesis via salvage pathway; AMP from ADP: step 1/1. Functionally, catalyzes the reversible transfer of the terminal phosphate group between ATP and AMP. Plays an important role in cellular energy homeostasis and in adenine nucleotide metabolism. The sequence is that of Adenylate kinase from Buchnera aphidicola subsp. Acyrthosiphon pisum (strain 5A).